A 167-amino-acid polypeptide reads, in one-letter code: Small ribosomal subunit protein uS5 (167 aa).

An S5 DRBM domain is found at 11–74; sequence LQEKLIAVNR…EKARRNMINV (64 aa).

It belongs to the universal ribosomal protein uS5 family. In terms of assembly, part of the 30S ribosomal subunit. Contacts proteins S4 and S8.

Its function is as follows. With S4 and S12 plays an important role in translational accuracy. Located at the back of the 30S subunit body where it stabilizes the conformation of the head with respect to the body. This is Small ribosomal subunit protein uS5 from Escherichia coli O139:H28 (strain E24377A / ETEC).